Here is a 150-residue protein sequence, read N- to C-terminus: Globin-5 (150 aa).

In terms of domain architecture, Globin spans 11 to 150; that stretch reads PLSAAEKTKI…MICILLRSAY (140 aa). Residues histidine 74 and histidine 106 each contribute to the heme b site.

It belongs to the globin family. Monomer at high oxygen tension and high pH and dimeric at low oxygen tension and lower pH.

This chain is Globin-5, found in Petromyzon marinus (Sea lamprey).